The sequence spans 243 residues: Putative outer membrane protein RP075 (243 aa).

Residues 1-23 (MLRIVKKLWVILFISNISINSFA) form the signal peptide.

It belongs to the OmpW/AlkL family.

It localises to the cell outer membrane. The sequence is that of Putative outer membrane protein RP075 from Rickettsia prowazekii (strain Madrid E).